The sequence spans 347 residues: Protein RecA (347 aa).

64-71 (GPESSGKT) lines the ATP pocket.

Belongs to the RecA family.

It localises to the cytoplasm. Functionally, can catalyze the hydrolysis of ATP in the presence of single-stranded DNA, the ATP-dependent uptake of single-stranded DNA by duplex DNA, and the ATP-dependent hybridization of homologous single-stranded DNAs. It interacts with LexA causing its activation and leading to its autocatalytic cleavage. This chain is Protein RecA, found in Bartonella quintana (strain Toulouse) (Rochalimaea quintana).